The following is a 126-amino-acid chain: UPF0102 protein Mlg_2205 (126 aa).

Belongs to the UPF0102 family.

This is UPF0102 protein Mlg_2205 from Alkalilimnicola ehrlichii (strain ATCC BAA-1101 / DSM 17681 / MLHE-1).